We begin with the raw amino-acid sequence, 143 residues long: Large ribosomal subunit protein uL11 (143 aa).

Belongs to the universal ribosomal protein uL11 family. Part of the ribosomal stalk of the 50S ribosomal subunit. Interacts with L10 and the large rRNA to form the base of the stalk. L10 forms an elongated spine to which L12 dimers bind in a sequential fashion forming a multimeric L10(L12)X complex. Post-translationally, one or more lysine residues are methylated.

Forms part of the ribosomal stalk which helps the ribosome interact with GTP-bound translation factors. This Aromatoleum aromaticum (strain DSM 19018 / LMG 30748 / EbN1) (Azoarcus sp. (strain EbN1)) protein is Large ribosomal subunit protein uL11.